The chain runs to 67 residues: Neurotoxin Cex9 (67 aa).

In terms of domain architecture, LCN-type CS-alpha/beta spans 1–65 (KDGYPVEVTG…TWPLPNKSCG (65 aa)). 4 disulfides stabilise this stretch: Cys11–Cys64, Cys15–Cys40, Cys24–Cys45, and Cys28–Cys47. Cys64 carries the post-translational modification Cysteine amide. Positions 65–67 (GKK) are excised as a propeptide.

This sequence belongs to the long (4 C-C) scorpion toxin superfamily. Sodium channel inhibitor family. Beta subfamily. As to expression, expressed by the venom gland.

It is found in the secreted. Functionally, beta toxins bind voltage-independently at site-4 of sodium channels (Nav) and shift the voltage of activation toward more negative potentials thereby affecting sodium channel activation and promoting spontaneous and repetitive firing. The chain is Neurotoxin Cex9 from Centruroides exilicauda (Bark scorpion).